Reading from the N-terminus, the 195-residue chain is MEVHNVELQISAVRPDQYPEQGYPEIALVGRSNVGKSSLTNTLINRKSYARTSSQPGKTQTLNFYRVEDQLFFVDVPGYGYAKVSQKEREKWGKMIEKYITSRKELKGVISLVDARHEPTDDDITMYQYLRYYDIPVLVVATKSDKIARGKWNQHESKIKKALDFDGSSAFQMFSAQTKMGKEEVWKWIEDRMGE.

The region spanning 22–195 is the EngB-type G domain; that stretch reads GYPEIALVGR…WKWIEDRMGE (174 aa). GTP-binding positions include 30–37, 57–61, 75–78, 142–145, and 173–176; these read GRSNVGKS, GKTQT, DVPG, TKSD, and MFSA. Mg(2+) is bound by residues S37 and T59.

The protein belongs to the TRAFAC class TrmE-Era-EngA-EngB-Septin-like GTPase superfamily. EngB GTPase family. Mg(2+) serves as cofactor.

Necessary for normal cell division and for the maintenance of normal septation. The sequence is that of Probable GTP-binding protein EngB from Pediococcus pentosaceus (strain ATCC 25745 / CCUG 21536 / LMG 10740 / 183-1w).